The primary structure comprises 451 residues: UDP-N-acetyl-alpha-D-muramoyl-L-alanyl-L-glutamate epimerase (451 aa).

Belongs to the MurL family.

It carries out the reaction UDP-N-acetyl-alpha-D-muramoyl-L-alanyl-L-glutamate + ATP + H2O = UDP-N-acetyl-alpha-D-muramoyl-L-alanyl-D-glutamate + AMP + diphosphate + H(+). Its pathway is cell wall biogenesis; peptidoglycan biosynthesis. In terms of biological role, cell wall formation. Catalyzes epimerization of the terminal L-glutamate in UDP-N-acetyl-alpha-D-muramoyl-L-alanyl-L-glutamate. The sequence is that of UDP-N-acetyl-alpha-D-muramoyl-L-alanyl-L-glutamate epimerase from Xanthomonas oryzae pv. oryzae (strain MAFF 311018).